The chain runs to 464 residues: Soluble pyridine nucleotide transhydrogenase (464 aa).

Residue 35 to 44 (DDRRQVGGNC) participates in FAD binding.

Belongs to the class-I pyridine nucleotide-disulfide oxidoreductase family. It depends on FAD as a cofactor.

It is found in the cytoplasm. The catalysed reaction is NAD(+) + NADPH = NADH + NADP(+). Conversion of NADPH, generated by peripheral catabolic pathways, to NADH, which can enter the respiratory chain for energy generation. This Pseudomonas putida (strain GB-1) protein is Soluble pyridine nucleotide transhydrogenase.